The following is a 366-amino-acid chain: Mitogen-activated protein kinase 13 (366 aa).

A Protein kinase domain is found at 25–308; it reads YLAPAHVGSG…AAQALAHPFF (284 aa). ATP-binding positions include 31–39 and lysine 54; that span reads VGSGAYGAV. Aspartate 150 acts as the Proton acceptor in catalysis. At threonine 180 the chain carries Phosphothreonine; by MAP2K3, MAP2K4, MAP2K6 and MAP2K7. Residues 180–182 carry the TXY motif; it reads TGY. Tyrosine 182 bears the Phosphotyrosine mark. Position 350 is a phosphoserine (serine 350).

It belongs to the protein kinase superfamily. CMGC Ser/Thr protein kinase family. MAP kinase subfamily. Interacts with MAPK8IP2. Requires Mg(2+) as cofactor. In terms of processing, dually phosphorylated on Thr-180 and Tyr-182 by MAP2K3/MKK3, MAP2K4/MKK4, MAP2K6/MKK6 and MAP2K7/MKK7, which activates the enzyme. Dephosphorylated by dual specificity phosphatase DUSP1.

It carries out the reaction L-seryl-[protein] + ATP = O-phospho-L-seryl-[protein] + ADP + H(+). The catalysed reaction is L-threonyl-[protein] + ATP = O-phospho-L-threonyl-[protein] + ADP + H(+). Activated by phosphorylation on threonine and tyrosine by dual specificity kinases, MAP2K3/MKK3, MAP2K6/MKK6, MAP2K4/MKK4 and MAP2K7/MKK7. Activation by ultraviolet radiation, hyperosmotic shock, anisomycin or by TNF-alpha is mediated by MAP2K3/MKK3. Inhibited by dual specificity phosphatase DUSP1. Functionally, serine/threonine kinase which acts as an essential component of the MAP kinase signal transduction pathway. MAPK13 is one of the four p38 MAPKs which play an important role in the cascades of cellular responses evoked by extracellular stimuli such as pro-inflammatory cytokines or physical stress leading to direct activation of transcription factors such as ELK1 and ATF2. Accordingly, p38 MAPKs phosphorylate a broad range of proteins and it has been estimated that they may have approximately 200 to 300 substrates each. MAPK13 is one of the less studied p38 MAPK isoforms. Some of the targets are downstream kinases such as MAPKAPK2, which are activated through phosphorylation and further phosphorylate additional targets. Plays a role in the regulation of protein translation by phosphorylating and inactivating EEF2K. Involved in cytoskeletal remodeling through phosphorylation of MAPT and STMN1. Mediates UV irradiation induced up-regulation of the gene expression of CXCL14. Plays an important role in the regulation of epidermal keratinocyte differentiation, apoptosis and skin tumor development. Phosphorylates the transcriptional activator MYB in response to stress which leads to rapid MYB degradation via a proteasome-dependent pathway. MAPK13 also phosphorylates and down-regulates PRKD1 during regulation of insulin secretion in pancreatic beta cells. The polypeptide is Mitogen-activated protein kinase 13 (Mapk13) (Mus musculus (Mouse)).